The chain runs to 346 residues: F(420)H(2) dehydrogenase subunit F (346 aa).

4Fe-4S ferredoxin-type domains are found at residues 5–34 and 46–76; these read IAEV…VKKA and YEKG…ENEL. 8 residues coordinate [4Fe-4S] cluster: cysteine 14, cysteine 17, cysteine 20, cysteine 24, cysteine 55, cysteine 58, cysteine 61, and cysteine 65.

The FPO complex is composed of at least 13 different subunits. [4Fe-4S] cluster serves as cofactor. Requires FAD as cofactor.

Its subcellular location is the membrane. The protein resides in the cytoplasm. It catalyses the reaction methanophenazine + reduced coenzyme F420-(gamma-L-Glu)(n) = dihydromethanophenazine + oxidized coenzyme F420-(gamma-L-Glu)(n) + H(+). The enzyme catalyses reduced coenzyme F420-(gamma-L-Glu)(n) + 2 oxidized [2Fe-2S]-[ferredoxin] = oxidized coenzyme F420-(gamma-L-Glu)(n) + 2 reduced [2Fe-2S]-[ferredoxin] + 3 H(+). Functionally, component of the F(420)H(2) dehydrogenase (FPO complex) which is part of the energy-conserving F(420)H(2):heterodisulfide oxidoreductase system. The membrane-bound electron transfer system of the complex plays an important role in the metabolism of methylotrophic methanogens when the organisms grow on methanol or methylamines. Catalyzes the oxidation of methanophenazine to dihydromethanophenazine. It shuttles electrons from F(420)H(2), via FAD and iron-sulfur (Fe-S) centers, to methanophenazine (an electron carrier in the membrane). It couples the redox reaction to proton translocation (for every two electrons transferred, two hydrogen ions are translocated across the cytoplasmic membrane), and thus conserves the redox energy in a proton gradient. It also catalyzes the oxidation of F(420)H(2) with quinones such as 2,3-dimethyl-1,4-naphthoquinone, 2-methyl-1,4-naphthoquinone and tetramethyl-p-benzoquinone. Might have a dual function, acting as an electron input module when connected to the membrane integral Fpo complex, or as a soluble single subunit, being involved in the reoxydation of reduced ferredoxin in the cytoplasm. This chain is F(420)H(2) dehydrogenase subunit F (fpoF), found in Methanosarcina mazei (strain ATCC BAA-159 / DSM 3647 / Goe1 / Go1 / JCM 11833 / OCM 88) (Methanosarcina frisia).